The primary structure comprises 210 residues: Large ribosomal subunit protein uL4 (210 aa).

Residues 46–85 (QGTASTLTRSEVRGGGRKPYKQKGTGRARQGSIRTPLRPG) are disordered. Basic residues predominate over residues 60–71 (GGRKPYKQKGTG).

Belongs to the universal ribosomal protein uL4 family. In terms of assembly, part of the 50S ribosomal subunit.

One of the primary rRNA binding proteins, this protein initially binds near the 5'-end of the 23S rRNA. It is important during the early stages of 50S assembly. It makes multiple contacts with different domains of the 23S rRNA in the assembled 50S subunit and ribosome. Its function is as follows. Forms part of the polypeptide exit tunnel. This Prochlorococcus marinus (strain AS9601) protein is Large ribosomal subunit protein uL4.